The primary structure comprises 355 residues: MAEKAENLPSSSAEASEEPSPQTGPNVNQKPSILVLGMAGSGKTTFVQRLTAFLHARKTPPYVINLDPAVSKVPYPVNVDIRDTVKYKEVMKEFGMGPNGAIMTCLNLMCTRFDKVIELINKRSSDFSVCLLDTPGQIEAFTWSASGSIITDSLASSHPTVVMYIVDSARATNPTTFMSNMLYACSILYRTKLPFIVVFNKADIVKPTFALKWMQDFERFDEALEDARSSYMNDLSRSLSLVLDEFYCGLKTVCVSSATGEGFEDVMTAIDESVEAYKKEYVPMYEKVLAEKKLLDEEERKKRDEETLKGKAVHDLNKVANPDEFLESELNSKIDRIHLGGVDEENEEDAELERS.

A disordered region spans residues 1–30 (MAEKAENLPSSSAEASEEPSPQTGPNVNQK). A compositionally biased stretch (low complexity) spans 9–21 (PSSSAEASEEPSP). 40–45 (GSGKTT) contributes to the GTP binding site. The Gly-Pro-Asn (GPN)-loop; involved in dimer interface motif lies at 97–99 (GPN). 200-203 (NKAD) provides a ligand contact to GTP. A coiled-coil region spans residues 286 to 311 (EKVLAEKKLLDEEERKKRDEETLKGK).

Belongs to the GPN-loop GTPase family. Heterodimer with GPN3. Binds to RNA polymerase II (RNAPII).

Its subcellular location is the cytoplasm. The protein resides in the nucleus. Functionally, small GTPase required for proper nuclear import of RNA polymerase II (RNAPII). May act at an RNAP assembly step prior to nuclear import. The protein is GPN-loop GTPase 1 of Caenorhabditis elegans.